A 239-amino-acid chain; its full sequence is Ribonuclease PH (239 aa).

Residues R86 and 124 to 126 (GTR) contribute to the phosphate site.

It belongs to the RNase PH family. In terms of assembly, homohexameric ring arranged as a trimer of dimers.

The enzyme catalyses tRNA(n+1) + phosphate = tRNA(n) + a ribonucleoside 5'-diphosphate. Its function is as follows. Phosphorolytic 3'-5' exoribonuclease that plays an important role in tRNA 3'-end maturation. Removes nucleotide residues following the 3'-CCA terminus of tRNAs; can also add nucleotides to the ends of RNA molecules by using nucleoside diphosphates as substrates, but this may not be physiologically important. Probably plays a role in initiation of 16S rRNA degradation (leading to ribosome degradation) during starvation. The sequence is that of Ribonuclease PH from Rhizobium leguminosarum bv. trifolii (strain WSM2304).